A 147-amino-acid polypeptide reads, in one-letter code: MRLVVQRVTSASVKVEEEITGAINEGYMVLVGVTHEDTEEDVHYLADKLAHLRIFEDENGKMNHSLLDVKGSVLSVSQFTLYGDTRKGRRPNFMKAAKPDAANALYECFNKALREKGIHVETGRFGAMMDVSLTNSGPVTIWMDSKE.

The Gly-cisPro motif, important for rejection of L-amino acids signature appears at 137-138 (GP).

This sequence belongs to the DTD family. As to quaternary structure, homodimer.

The protein localises to the cytoplasm. The enzyme catalyses glycyl-tRNA(Ala) + H2O = tRNA(Ala) + glycine + H(+). It carries out the reaction a D-aminoacyl-tRNA + H2O = a tRNA + a D-alpha-amino acid + H(+). Its function is as follows. An aminoacyl-tRNA editing enzyme that deacylates mischarged D-aminoacyl-tRNAs. Also deacylates mischarged glycyl-tRNA(Ala), protecting cells against glycine mischarging by AlaRS. Acts via tRNA-based rather than protein-based catalysis; rejects L-amino acids rather than detecting D-amino acids in the active site. By recycling D-aminoacyl-tRNA to D-amino acids and free tRNA molecules, this enzyme counteracts the toxicity associated with the formation of D-aminoacyl-tRNA entities in vivo and helps enforce protein L-homochirality. This chain is D-aminoacyl-tRNA deacylase, found in Bacillus pumilus (strain SAFR-032).